A 155-amino-acid polypeptide reads, in one-letter code: Small ribosomal subunit protein uS7c (155 aa).

The protein belongs to the universal ribosomal protein uS7 family. In terms of assembly, part of the 30S ribosomal subunit.

The protein resides in the plastid. The protein localises to the chloroplast. Functionally, one of the primary rRNA binding proteins, it binds directly to 16S rRNA where it nucleates assembly of the head domain of the 30S subunit. The sequence is that of Small ribosomal subunit protein uS7c (rps7) from Staurastrum punctulatum (Green alga).